Reading from the N-terminus, the 382-residue chain is Pyrimidine monooxygenase RutA (382 aa).

FMN-binding positions include 68–69, asparagine 134, glutamate 143, 159–160, and serine 209; these read IK and RY.

It belongs to the NtaA/SnaA/DszA monooxygenase family. RutA subfamily.

The enzyme catalyses uracil + FMNH2 + NADH + O2 = (Z)-3-ureidoacrylate + FMN + NAD(+) + H2O + H(+). It catalyses the reaction thymine + FMNH2 + NADH + O2 = (Z)-2-methylureidoacrylate + FMN + NAD(+) + H2O + H(+). Catalyzes the pyrimidine ring opening between N-3 and C-4 by an unusual flavin hydroperoxide-catalyzed mechanism, adding oxygen atoms in the process to yield ureidoacrylate peracid, that immediately reacts with FMN forming ureidoacrylate and FMN-N(5)-oxide. The FMN-N(5)-oxide reacts spontaneously with NADH to produce FMN. Requires the flavin reductase RutF to regenerate FMN in vivo. The protein is Pyrimidine monooxygenase RutA (rutA) of Escherichia coli O157:H7.